The sequence spans 238 residues: Small ribosomal subunit protein uS2 (238 aa).

This sequence belongs to the universal ribosomal protein uS2 family.

The sequence is that of Small ribosomal subunit protein uS2 from Synechococcus sp. (strain CC9311).